Consider the following 313-residue polypeptide: Homoserine O-succinyltransferase (313 aa).

Cys142 (acyl-thioester intermediate) is an active-site residue. Residues Lys163 and Ser192 each contribute to the substrate site. His235 acts as the Proton acceptor in catalysis. Residue Glu237 is part of the active site. Arg249 serves as a coordination point for substrate.

It belongs to the MetA family.

It localises to the cytoplasm. The enzyme catalyses L-homoserine + succinyl-CoA = O-succinyl-L-homoserine + CoA. It participates in amino-acid biosynthesis; L-methionine biosynthesis via de novo pathway; O-succinyl-L-homoserine from L-homoserine: step 1/1. Functionally, transfers a succinyl group from succinyl-CoA to L-homoserine, forming succinyl-L-homoserine. This chain is Homoserine O-succinyltransferase, found in Shewanella oneidensis (strain ATCC 700550 / JCM 31522 / CIP 106686 / LMG 19005 / NCIMB 14063 / MR-1).